The sequence spans 241 residues: Outer membrane protein assembly factor BamD (241 aa).

An N-terminal signal peptide occupies residues 1–17 (MKYQTLSGLLALSLLFG). Residue Cys18 is the site of N-palmitoyl cysteine attachment. A lipid anchor (S-diacylglycerol cysteine) is attached at Cys18.

The protein belongs to the BamD family. Part of the Bam complex.

Its subcellular location is the cell outer membrane. Functionally, part of the outer membrane protein assembly complex, which is involved in assembly and insertion of beta-barrel proteins into the outer membrane. The chain is Outer membrane protein assembly factor BamD from Vibrio cholerae serotype O1 (strain ATCC 39315 / El Tor Inaba N16961).